The primary structure comprises 357 residues: Meiotically up-regulated gene 135 protein (357 aa).

The protein belongs to the UPF0612 family.

It localises to the nucleus. In terms of biological role, has a role in meiosis. The sequence is that of Meiotically up-regulated gene 135 protein (mug135) from Schizosaccharomyces pombe (strain 972 / ATCC 24843) (Fission yeast).